The primary structure comprises 564 residues: Phenylalanine--tRNA ligase beta subunit (564 aa).

In terms of domain architecture, B5 spans 286–362 (YFQNSLKINV…IGKGLDNFKS (77 aa)). Mg(2+) is bound by residues Asp340, Asp346, Glu349, and Glu350.

It belongs to the phenylalanyl-tRNA synthetase beta subunit family. Type 2 subfamily. Tetramer of two alpha and two beta subunits. Mg(2+) serves as cofactor.

The protein resides in the cytoplasm. It catalyses the reaction tRNA(Phe) + L-phenylalanine + ATP = L-phenylalanyl-tRNA(Phe) + AMP + diphosphate + H(+). This is Phenylalanine--tRNA ligase beta subunit from Borrelia recurrentis (strain A1).